Here is a 677-residue protein sequence, read N- to C-terminus: DNA ligase (677 aa).

NAD(+)-binding positions include aspartate 32 to aspartate 36, serine 81 to leucine 82, and glutamate 112. Residue lysine 114 is the N6-AMP-lysine intermediate of the active site. Arginine 135, glutamate 171, lysine 288, and lysine 312 together coordinate NAD(+). Zn(2+) is bound by residues cysteine 416, cysteine 419, cysteine 434, and cysteine 439. The 80-residue stretch at tyrosine 598–serine 677 folds into the BRCT domain.

This sequence belongs to the NAD-dependent DNA ligase family. LigA subfamily. Mg(2+) serves as cofactor. Mn(2+) is required as a cofactor.

It carries out the reaction NAD(+) + (deoxyribonucleotide)n-3'-hydroxyl + 5'-phospho-(deoxyribonucleotide)m = (deoxyribonucleotide)n+m + AMP + beta-nicotinamide D-nucleotide.. DNA ligase that catalyzes the formation of phosphodiester linkages between 5'-phosphoryl and 3'-hydroxyl groups in double-stranded DNA using NAD as a coenzyme and as the energy source for the reaction. It is essential for DNA replication and repair of damaged DNA. In Dehalococcoides mccartyi (strain ATCC BAA-2266 / KCTC 15142 / 195) (Dehalococcoides ethenogenes (strain 195)), this protein is DNA ligase.